The primary structure comprises 213 residues: Small ribosomal subunit protein uS3 (213 aa).

Positions 38–106 (IREYLENRLS…RVHINIVEIK (69 aa)) constitute a KH type-2 domain.

Belongs to the universal ribosomal protein uS3 family. As to quaternary structure, part of the 30S ribosomal subunit. Forms a tight complex with proteins S10 and S14.

Functionally, binds the lower part of the 30S subunit head. Binds mRNA in the 70S ribosome, positioning it for translation. This is Small ribosomal subunit protein uS3 from Oceanobacillus iheyensis (strain DSM 14371 / CIP 107618 / JCM 11309 / KCTC 3954 / HTE831).